Consider the following 158-residue polypeptide: Large ribosomal subunit protein uL15 (158 aa).

Basic and acidic residues predominate over residues 1-13 (MKLNEIKDNEGST). The segment at 1–45 (MKLNEIKDNEGSTHSRKRLGRGIGSGSGKTGGRGVKGQKSRSGVA) is disordered. The span at 21–35 (RGIGSGSGKTGGRGV) shows a compositional bias: gly residues.

This sequence belongs to the universal ribosomal protein uL15 family. In terms of assembly, part of the 50S ribosomal subunit.

Functionally, binds to the 23S rRNA. The chain is Large ribosomal subunit protein uL15 from Rhizobium leguminosarum bv. trifolii (strain WSM2304).